The chain runs to 1403 residues: Baculoviral IAP repeat-containing protein 1e (1403 aa).

BIR repeat units follow at residues 60 to 127 (EAKR…CEFL), 159 to 227 (EEAR…CEFL), and 278 to 345 (EELR…CVFL). Zn(2+) is bound by residues Cys-315, Cys-318, His-335, and Cys-342. The NACHT domain maps to 464–759 (SVMCVEGETG…EFLAAVRLTE (296 aa)). 473-478 (GSGKTT) serves as a coordination point for ATP.

In terms of assembly, component of the NLRC4 inflammasome, at least composed of NLRC4, caspase-1 (CASP1) and some NAIP protein. Flagellin binding by NAIP5 triggers assembly of the inflammasome, a huge complex that contains a single NAIP5 chain and multiple copies of NLRC4. As to quaternary structure, (Microbial infection) Interacts with S.typhimurium (Salmonella) flagellin. (Microbial infection) Interacts with L.pneumophila flagellin. In terms of tissue distribution, detected in macrophages (at protein level).

In terms of biological role, sensor component of the NLRC4 inflammasome that specifically recognizes and binds flagellin from pathogenic bacteria such as Legionella or Salmonella. Association of pathogenic bacteria proteins drives in turn drive assembly and activation of the NLRC4 inflammasome, promoting caspase-1 activation, cytokine production and macrophage pyroptosis. The NLRC4 inflammasome is activated as part of the innate immune response to a range of intracellular bacteria. The NLRC4 inflammasome senses Gram-negative bacteria such as L.pneumophila and P.aeruginosa, enteric pathogens S.typhimurium (Salmonella) and S.flexneri. May contribute to prevent motor-neuron apoptosis induced by a variety of signals. This Mus musculus (Mouse) protein is Baculoviral IAP repeat-containing protein 1e.